Consider the following 312-residue polypeptide: Holliday junction branch migration complex subunit RuvB (312 aa).

The large ATPase domain (RuvB-L) stretch occupies residues 1-168; the sequence is MKTNNEFRPQ…FGHVFYLSEY (168 aa). ATP-binding positions include Arg-8, Gly-49, Lys-52, Thr-53, Thr-54, 115 to 117, Arg-158, Tyr-168, and Arg-206; that span reads EDF. Position 53 (Thr-53) interacts with Mg(2+). Positions 169–234 are small ATPAse domain (RuvB-S); that stretch reads ETSEIAAIIL…NIKNIFEKIQ (66 aa). The head domain (RuvB-H) stretch occupies residues 237–312; sequence DFGLEEQDIN…EFLKNNQLIK (76 aa). Residues Lys-290 and Arg-295 each coordinate DNA.

This sequence belongs to the RuvB family. In terms of assembly, homohexamer. Forms an RuvA(8)-RuvB(12)-Holliday junction (HJ) complex. HJ DNA is sandwiched between 2 RuvA tetramers; dsDNA enters through RuvA and exits via RuvB. An RuvB hexamer assembles on each DNA strand where it exits the tetramer. Each RuvB hexamer is contacted by two RuvA subunits (via domain III) on 2 adjacent RuvB subunits; this complex drives branch migration. In the full resolvosome a probable DNA-RuvA(4)-RuvB(12)-RuvC(2) complex forms which resolves the HJ.

It localises to the cytoplasm. The enzyme catalyses ATP + H2O = ADP + phosphate + H(+). In terms of biological role, the RuvA-RuvB-RuvC complex processes Holliday junction (HJ) DNA during genetic recombination and DNA repair, while the RuvA-RuvB complex plays an important role in the rescue of blocked DNA replication forks via replication fork reversal (RFR). RuvA specifically binds to HJ cruciform DNA, conferring on it an open structure. The RuvB hexamer acts as an ATP-dependent pump, pulling dsDNA into and through the RuvAB complex. RuvB forms 2 homohexamers on either side of HJ DNA bound by 1 or 2 RuvA tetramers; 4 subunits per hexamer contact DNA at a time. Coordinated motions by a converter formed by DNA-disengaged RuvB subunits stimulates ATP hydrolysis and nucleotide exchange. Immobilization of the converter enables RuvB to convert the ATP-contained energy into a lever motion, pulling 2 nucleotides of DNA out of the RuvA tetramer per ATP hydrolyzed, thus driving DNA branch migration. The RuvB motors rotate together with the DNA substrate, which together with the progressing nucleotide cycle form the mechanistic basis for DNA recombination by continuous HJ branch migration. Branch migration allows RuvC to scan DNA until it finds its consensus sequence, where it cleaves and resolves cruciform DNA. This Ureaplasma urealyticum serovar 10 (strain ATCC 33699 / Western) protein is Holliday junction branch migration complex subunit RuvB.